The sequence spans 134 residues: Ion transport peptide-like (134 aa).

Intrachain disulfides connect Cys62/Cys98, Cys78/Cys94, and Cys81/Cys107.

Belongs to the arthropod CHH/MIH/GIH/VIH hormone family.

It is found in the secreted. The polypeptide is Ion transport peptide-like (Schistocerca gregaria (Desert locust)).